A 303-amino-acid polypeptide reads, in one-letter code: Probable alpha-L-glutamate ligase (303 aa).

One can recognise an ATP-grasp domain in the interval 104–287 (LQLLAREGID…IAGMMIEFIE (184 aa)). Residues lysine 141, 178 to 179 (EY), aspartate 187, and 211 to 213 (RSN) each bind ATP. Residues aspartate 248, glutamate 260, and asparagine 262 each contribute to the Mg(2+) site. 3 residues coordinate Mn(2+): aspartate 248, glutamate 260, and asparagine 262.

Belongs to the RimK family. Requires Mg(2+) as cofactor. It depends on Mn(2+) as a cofactor.

The sequence is that of Probable alpha-L-glutamate ligase from Pectobacterium carotovorum subsp. carotovorum (strain PC1).